We begin with the raw amino-acid sequence, 154 residues long: Myoglobin (154 aa).

Residues 2-148 (GLSDGEWQLV…FRNDIAAKYK (147 aa)) enclose the Globin domain. Phosphoserine is present on Ser4. His65 contacts nitrite. His65 contacts O2. Position 68 is a phosphothreonine (Thr68). Position 94 (His94) interacts with heme b.

It belongs to the globin family. In terms of assembly, monomeric.

The protein resides in the cytoplasm. It is found in the sarcoplasm. It catalyses the reaction Fe(III)-heme b-[protein] + nitric oxide + H2O = Fe(II)-heme b-[protein] + nitrite + 2 H(+). The catalysed reaction is H2O2 + AH2 = A + 2 H2O. Functionally, monomeric heme protein which primary function is to store oxygen and facilitate its diffusion within muscle tissues. Reversibly binds oxygen through a pentacoordinated heme iron and enables its timely and efficient release as needed during periods of heightened demand. Depending on the oxidative conditions of tissues and cells, and in addition to its ability to bind oxygen, it also has a nitrite reductase activity whereby it regulates the production of bioactive nitric oxide. Under stress conditions, like hypoxia and anoxia, it also protects cells against reactive oxygen species thanks to its pseudoperoxidase activity. This is Myoglobin (MB) from Lagostomus maximus (Plains viscacha).